A 109-amino-acid polypeptide reads, in one-letter code: Ribonuclease P protein component (109 aa).

It belongs to the RnpA family. As to quaternary structure, consists of a catalytic RNA component (M1 or rnpB) and a protein subunit.

The catalysed reaction is Endonucleolytic cleavage of RNA, removing 5'-extranucleotides from tRNA precursor.. Functionally, RNaseP catalyzes the removal of the 5'-leader sequence from pre-tRNA to produce the mature 5'-terminus. It can also cleave other RNA substrates such as 4.5S RNA. The protein component plays an auxiliary but essential role in vivo by binding to the 5'-leader sequence and broadening the substrate specificity of the ribozyme. This Streptococcus agalactiae serotype III (strain NEM316) protein is Ribonuclease P protein component.